Consider the following 159-residue polypeptide: SsrA-binding protein (159 aa).

Residues 137 to 159 (KRQTEKERDWEREKQRLFQRDQR) form a disordered region.

The protein belongs to the SmpB family.

The protein localises to the cytoplasm. Required for rescue of stalled ribosomes mediated by trans-translation. Binds to transfer-messenger RNA (tmRNA), required for stable association of tmRNA with ribosomes. tmRNA and SmpB together mimic tRNA shape, replacing the anticodon stem-loop with SmpB. tmRNA is encoded by the ssrA gene; the 2 termini fold to resemble tRNA(Ala) and it encodes a 'tag peptide', a short internal open reading frame. During trans-translation Ala-aminoacylated tmRNA acts like a tRNA, entering the A-site of stalled ribosomes, displacing the stalled mRNA. The ribosome then switches to translate the ORF on the tmRNA; the nascent peptide is terminated with the 'tag peptide' encoded by the tmRNA and targeted for degradation. The ribosome is freed to recommence translation, which seems to be the essential function of trans-translation. This Cellvibrio japonicus (strain Ueda107) (Pseudomonas fluorescens subsp. cellulosa) protein is SsrA-binding protein.